A 255-amino-acid chain; its full sequence is Membrane protein insertase YidC 2 (255 aa).

An N-terminal signal peptide occupies residues 1-20 (MKKKLGLLAMVVALMAITAG). A lipid anchor (N-palmitoyl cysteine) is attached at Cys-21. The S-diacylglycerol cysteine moiety is linked to residue Cys-21. The next 5 helical transmembrane spans lie at 59-79 (YGLA…PLMI), 129-149 (LAGC…YHAI), 160-180 (FLWF…VAAI), 202-222 (MMLW…PAAL), and 223-243 (SLYW…IKGP).

Belongs to the OXA1/ALB3/YidC family. Type 2 subfamily.

It localises to the cell membrane. In terms of biological role, required for the insertion and/or proper folding and/or complex formation of integral membrane proteins into the membrane. Involved in integration of membrane proteins that insert both dependently and independently of the Sec translocase complex, as well as at least some lipoproteins. In Bacillus anthracis, this protein is Membrane protein insertase YidC 2.